A 481-amino-acid polypeptide reads, in one-letter code: Zinc finger CCCH domain-containing protein 4 (481 aa).

The C3H1-type zinc-finger motif lies at 157–184 (RNRAHVCSFFIRGECTRGAECPYRHEMP). The 74-residue stretch at 228–301 (KTLYVGGLNS…QRLKLTWGRP (74 aa)) folds into the RRM domain. Residues 329–481 (HNQPPPMQQY…DVSTATGSSQ (153 aa)) are disordered. The span at 331–345 (QPPPMQQYYMHPPPA) shows a compositional bias: pro residues. 2 stretches are compositionally biased toward low complexity: residues 369-389 (AGGSSTENNGASSSSYMMPPH) and 399-410 (YMPSPYQQQYPP). Residues 423–444 (APPPAAYPYPQQPGPGSRPAPS) are compositionally biased toward pro residues. A compositionally biased stretch (low complexity) spans 449-471 (SAISPDSAPAGSGAPSGSSQQAP). Residues 472–481 (DVSTATGSSQ) show a composition bias toward polar residues.

This Arabidopsis thaliana (Mouse-ear cress) protein is Zinc finger CCCH domain-containing protein 4.